The sequence spans 114 residues: Amphinase-3 (114 aa).

Residue His-15 is the Proton acceptor of the active site. A glycan (N-linked (GlcNAc...) asparagine) is linked at Asn-25. 4 cysteine pairs are disulfide-bonded: Cys-26/Cys-79, Cys-41/Cys-85, Cys-59/Cys-100, and Cys-97/Cys-114. Position 42–46 (42–46 (KPINT)) interacts with substrate. Asn-67 and Asn-91 each carry an N-linked (GlcNAc...) asparagine glycan. Catalysis depends on His-107, which acts as the Proton donor.

The protein belongs to the pancreatic ribonuclease family. Monomer. Post-translationally, there are at least five different forms arising from glycan heterogeneity.

The protein localises to the secreted. In terms of biological role, endonuclease, hydrolyzes highly polymerized RNA, poly(U) and poly(C), and the dinucleotides CpA and UpA. More active towards rCA than rUA or rUG. Has cytotoxic activity against cultured human submaxillary gland carcinoma cells. In Lithobates pipiens (Northern leopard frog), this protein is Amphinase-3.